We begin with the raw amino-acid sequence, 390 residues long: (S)-8-oxocitronellyl enol synthase CYC2 (390 aa).

NADP(+) is bound by residues 35–37, 63–64, 81–82, 105–106, and Gln-143; these read TGI, RR, DI, and TW. Catalysis depends on residues Lys-147 and Tyr-179. Lys-147 and Tyr-179 together coordinate substrate. NADP(+)-binding positions include Tyr-179 and 213–215; that span reads SMM.

It belongs to the short-chain dehydrogenases/reductases (SDR) family. Highly divergent.

The enzyme catalyses (S)-8-oxocitronellyl enol + NADP(+) = (6E)-8-oxogeranial + NADPH + H(+). It carries out the reaction (S)-8-oxocitronellyl enol + NAD(+) = (6E)-8-oxogeranial + NADH + H(+). Functionally, iridoid synthase that catalyzes the first step in generation of the iridoid ring scaffold using the linear monoterpene (6E)-8-oxogeranial as substrate. Iridoids comprise a large family of distinctive bicyclic monoterpenes that possess a wide range of pharmacological activities, including anticancer, anti-inflammatory, antifungal and antibacterial activities. This Camptotheca acuminata (Happy tree) protein is (S)-8-oxocitronellyl enol synthase CYC2.